The chain runs to 161 residues: S-ribosylhomocysteine lyase (161 aa).

Residues His-58, His-62, and Cys-128 each coordinate Fe cation.

This sequence belongs to the LuxS family. In terms of assembly, homodimer. Fe cation is required as a cofactor.

It carries out the reaction S-(5-deoxy-D-ribos-5-yl)-L-homocysteine = (S)-4,5-dihydroxypentane-2,3-dione + L-homocysteine. In terms of biological role, involved in the synthesis of autoinducer 2 (AI-2) which is secreted by bacteria and is used to communicate both the cell density and the metabolic potential of the environment. The regulation of gene expression in response to changes in cell density is called quorum sensing. Catalyzes the transformation of S-ribosylhomocysteine (RHC) to homocysteine (HC) and 4,5-dihydroxy-2,3-pentadione (DPD). This Bifidobacterium adolescentis (strain ATCC 15703 / DSM 20083 / NCTC 11814 / E194a) protein is S-ribosylhomocysteine lyase.